The sequence spans 330 residues: Protein-lysine N-methyltransferase EEF2KMT (330 aa).

Methionine 1 carries the N-acetylmethionine modification. Residues tryptophan 139, glycine 165 to glycine 167, tryptophan 228, and alanine 247 each bind S-adenosyl-L-methionine.

This sequence belongs to the class I-like SAM-binding methyltransferase superfamily. EEF2KMT family. As to quaternary structure, interacts with FAM86B2 and FAM86C1P.

The protein localises to the cytoplasm. The enzyme catalyses L-lysyl-[protein] + 3 S-adenosyl-L-methionine = N(6),N(6),N(6)-trimethyl-L-lysyl-[protein] + 3 S-adenosyl-L-homocysteine + 3 H(+). Functionally, catalyzes the trimethylation of eukaryotic elongation factor 2 (EEF2) on 'Lys-525'. This is Protein-lysine N-methyltransferase EEF2KMT from Homo sapiens (Human).